The following is a 569-amino-acid chain: 63 kDa chaperonin, mitochondrial (569 aa).

The transit peptide at 1–29 directs the protein to the mitochondrion; it reads MFKMYRSPHITRNSFKYLKATNINSCRFY.

Belongs to the chaperonin (HSP60) family. In terms of assembly, forms a single seven-member ring complex, in tight association with the p60 protein. As to expression, testis.

It localises to the mitochondrion. In terms of biological role, implicated in mitochondrial protein import and macromolecular assembly. May facilitate the correct folding of imported proteins. May also prevent misfolding and promote the refolding and proper assembly of unfolded polypeptides generated under stress conditions in the mitochondrial matrix. The protein is 63 kDa chaperonin, mitochondrial of Heliothis virescens (Tobacco budworm moth).